The primary structure comprises 541 residues: Putative transferase YhbX (541 aa).

Residues 1–60 (MTVFNKFARSFKSHWLLYLSVIVFGITNLVASSGAHMVQRLLFFVLTILVVKRISSLPLR) are Periplasmic-facing. The helical transmembrane segment at 61 to 81 (LLVAAPFVLLTAADMSISLYS) threads the bilayer. At 82 to 110 (WCTFGTTFNDGFAISVLQSDPDEVAKMLG) the chain is on the cytoplasmic side. The helical transmembrane segment at 111–131 (MYSPYLCAFAFLSLLFLAVII) threads the bilayer. Topologically, residues 132–141 (KYDVSLPTKK) are periplasmic. Residues 142–162 (VTGILLLIVISGSLFSACQFA) traverse the membrane as a helical segment. Over 163 to 264 (YKDAKNKNAF…RKQIKLFNQA (102 aa)) the chain is Cytoplasmic. A helical membrane pass occupies residues 265 to 285 (ISGAPYTALSVPLSLTADSVL). Topologically, residues 286–541 (SHDIHNYPDN…QGNPTPEGQG (256 aa)) are periplasmic.

Belongs to the phosphoethanolamine transferase family.

The protein resides in the cell inner membrane. In terms of biological role, there are several lipid A forms in this strain, including a phosphoethanolamine (1-O-P-pEtN) form; overexpression of this gene does not lead to higher levels of the 1-O-P-pEtN form of lipid A. The sequence is that of Putative transferase YhbX (yhbX) from Escherichia coli O157:H7.